Reading from the N-terminus, the 319-residue chain is Ribonuclease Z (319 aa).

Zn(2+) contacts are provided by His62, His64, Asp66, His67, His145, Asp216, and His274. Catalysis depends on Asp66, which acts as the Proton acceptor.

This sequence belongs to the RNase Z family. Homodimer. The cofactor is Zn(2+).

It carries out the reaction Endonucleolytic cleavage of RNA, removing extra 3' nucleotides from tRNA precursor, generating 3' termini of tRNAs. A 3'-hydroxy group is left at the tRNA terminus and a 5'-phosphoryl group is left at the trailer molecule.. In terms of biological role, zinc phosphodiesterase, which displays some tRNA 3'-processing endonuclease activity. Probably involved in tRNA maturation, by removing a 3'-trailer from precursor tRNA. In Synechococcus sp. (strain CC9605), this protein is Ribonuclease Z.